The chain runs to 133 residues: Arginine decarboxylase proenzyme (133 aa).

Serine 81 acts as the Schiff-base intermediate with substrate; via pyruvic acid in catalysis. Residue serine 81 is modified to Pyruvic acid (Ser); by autocatalysis. Histidine 86 (proton acceptor; for processing activity) is an active-site residue. Cysteine 101 serves as the catalytic Proton donor; for catalytic activity.

This sequence belongs to the prokaryotic AdoMetDC family. Type 1 subfamily. As to quaternary structure, heterooctamer of four alpha and four beta chains arranged as a tetramer of alpha/beta heterodimers. Pyruvate serves as cofactor. Post-translationally, is synthesized initially as an inactive proenzyme. Formation of the active enzyme involves a self-maturation process in which the active site pyruvoyl group is generated from an internal serine residue via an autocatalytic post-translational modification. Two non-identical subunits are generated from the proenzyme in this reaction, and the pyruvate is formed at the N-terminus of the alpha chain, which is derived from the carboxyl end of the proenzyme. The post-translation cleavage follows an unusual pathway, termed non-hydrolytic serinolysis, in which the side chain hydroxyl group of the serine supplies its oxygen atom to form the C-terminus of the beta chain, while the remainder of the serine residue undergoes an oxidative deamination to produce ammonia and the pyruvoyl group blocking the N-terminus of the alpha chain.

The enzyme catalyses L-arginine + H(+) = agmatine + CO2. It participates in amine and polyamine biosynthesis; agmatine biosynthesis; agmatine from L-arginine: step 1/1. In terms of biological role, specifically catalyzes the decarboxylation of L-arginine to agmatine. Has no S-adenosylmethionine decarboxylase (AdoMetDC) activity. This is Arginine decarboxylase proenzyme from Pyrobaculum arsenaticum (strain DSM 13514 / JCM 11321 / PZ6).